The primary structure comprises 121 residues: Group 1 truncated hemoglobin (121 aa).

Position 1 is an N-acetylmethionine (Met1). His73 is a binding site for heme.

It belongs to the truncated hemoglobin family. Group I subfamily. In terms of assembly, monomer. Heme serves as cofactor.

The protein is Group 1 truncated hemoglobin of Tetrahymena thermophila.